The primary structure comprises 529 residues: MAYLGVDTSRIAGTQPLEMLLVSSGSPDPHSTIIIDPRTGVSSWSYKGSELQGASTGLVEPLGHDGEHVVITTKERPLVHVLAVHPKDRFHQKCVLPGPVSAIVSDNSGHFVFMSIKRQLYCWLLSTGELLSVIDAHYQNITKIVISDDDSMIFTASKDGAVHGYLVTDLVSADRDHTVAPFRKWASHTLSISDLKITNGSNPRVLSAGADHIACLHSISMDSVILKASSDRPLTACAIDPAETRIFIGTEVGNIAQINLFQLAPEERDLLVQAGDEHNTKFRVLNGHSDEISRLAINTDGTLLASGDASGKYCIWEISSHQCLKVSTMRSVINTLRFIPFWKTISGGEHVAKFRPVWDLKREPTKCDRFAIEVSTEFNSDQKHWNDVIEETIDQLLLESGSKSSAQLQWDAEGPARNEAAKAEKAAENTIKNIITLGDDEDDAPEVGNQRRKSGKKNKKNRKNQKKNDFEAAVIEKKQVEPIVIDDEEEVNSSLQKKFDALKAENEKLKEINKQMYEFVAKEIVDSEK.

WD repeat units follow at residues 136–175 (AHYQ…SADR) and 287–326 (GHSD…CLKV). The stretch at 416–518 (ARNEAAKAEK…LKEINKQMYE (103 aa)) forms a coiled coil. Residues 436–470 (TLGDDEDDAPEVGNQRRKSGKKNKKNRKNQKKNDF) form a disordered region. Positions 450–465 (QRRKSGKKNKKNRKNQ) are enriched in basic residues.

This sequence belongs to the WD repeat IPI3/WDR18 family. In terms of assembly, component of the PELP1 complex, composed of at least PELP1, TEX10 and WDR18. The complex interacts with pre-60S ribosome particles.

It localises to the nucleus. It is found in the nucleolus. Its subcellular location is the nucleoplasm. Component of the PELP1 complex involved in the nucleolar steps of 28S rRNA maturation and the subsequent nucleoplasmic transit of the pre-60S ribosomal subunit. Required for processing ITS2 sequences from rRNA intermediates during 26S rRNA maturation. Required in the soma to promote normal proliferation and prevent germline tumor formation. The protein is Pre-rRNA-processing protein pro-1 of Caenorhabditis elegans.